Here is a 359-residue protein sequence, read N- to C-terminus: Peptide chain release factor 1 (359 aa).

The residue at position 235 (Gln235) is an N5-methylglutamine.

Belongs to the prokaryotic/mitochondrial release factor family. In terms of processing, methylated by PrmC. Methylation increases the termination efficiency of RF1.

The protein resides in the cytoplasm. Functionally, peptide chain release factor 1 directs the termination of translation in response to the peptide chain termination codons UAG and UAA. This is Peptide chain release factor 1 from Aromatoleum aromaticum (strain DSM 19018 / LMG 30748 / EbN1) (Azoarcus sp. (strain EbN1)).